The chain runs to 331 residues: Biotin synthase (331 aa).

The Radical SAM core domain maps to 52-277; that stretch reads PDVEVEGIIS…RTMLRFAGGR (226 aa). Cys67, Cys71, and Cys74 together coordinate [4Fe-4S] cluster. Positions 110, 143, 202, and 272 each coordinate [2Fe-2S] cluster.

The protein belongs to the radical SAM superfamily. Biotin synthase family. In terms of assembly, homodimer. The cofactor is [4Fe-4S] cluster. [2Fe-2S] cluster serves as cofactor.

The enzyme catalyses (4R,5S)-dethiobiotin + (sulfur carrier)-SH + 2 reduced [2Fe-2S]-[ferredoxin] + 2 S-adenosyl-L-methionine = (sulfur carrier)-H + biotin + 2 5'-deoxyadenosine + 2 L-methionine + 2 oxidized [2Fe-2S]-[ferredoxin]. Its pathway is cofactor biosynthesis; biotin biosynthesis; biotin from 7,8-diaminononanoate: step 2/2. Catalyzes the conversion of dethiobiotin (DTB) to biotin by the insertion of a sulfur atom into dethiobiotin via a radical-based mechanism. The sequence is that of Biotin synthase from Mycolicibacterium vanbaalenii (strain DSM 7251 / JCM 13017 / BCRC 16820 / KCTC 9966 / NRRL B-24157 / PYR-1) (Mycobacterium vanbaalenii).